The sequence spans 388 residues: LL-diaminopimelate aminotransferase (388 aa).

The substrate site is built by Y16 and G41. Pyridoxal 5'-phosphate-binding positions include Y70, 104 to 105 (SK), Y129, N179, Y210, and 239 to 241 (SLS). K105, Y129, and N179 together coordinate substrate. Residue K242 is modified to N6-(pyridoxal phosphate)lysine. R250 serves as a coordination point for pyridoxal 5'-phosphate. Position 368 (R368) interacts with substrate.

The protein belongs to the class-I pyridoxal-phosphate-dependent aminotransferase family. LL-diaminopimelate aminotransferase subfamily. In terms of assembly, homodimer. The cofactor is pyridoxal 5'-phosphate.

The catalysed reaction is (2S,6S)-2,6-diaminopimelate + 2-oxoglutarate = (S)-2,3,4,5-tetrahydrodipicolinate + L-glutamate + H2O + H(+). It functions in the pathway amino-acid biosynthesis; L-lysine biosynthesis via DAP pathway; LL-2,6-diaminopimelate from (S)-tetrahydrodipicolinate (aminotransferase route): step 1/1. In terms of biological role, involved in the synthesis of meso-diaminopimelate (m-DAP or DL-DAP), required for both lysine and peptidoglycan biosynthesis. Catalyzes the direct conversion of tetrahydrodipicolinate to LL-diaminopimelate. This Nitratidesulfovibrio vulgaris (strain ATCC 29579 / DSM 644 / CCUG 34227 / NCIMB 8303 / VKM B-1760 / Hildenborough) (Desulfovibrio vulgaris) protein is LL-diaminopimelate aminotransferase.